The sequence spans 287 residues: Acetyl-coenzyme A carboxylase carboxyl transferase subunit beta (287 aa).

In terms of domain architecture, CoA carboxyltransferase N-terminal spans 25–287 (IWTKCSGCVQ…KLTQQSFSEK (263 aa)). Residues Cys-29, Cys-32, Cys-48, and Cys-51 each contribute to the Zn(2+) site. The C4-type zinc finger occupies 29–51 (CSGCVQLLYTKELERNLQVCPKC).

This sequence belongs to the AccD/PCCB family. Acetyl-CoA carboxylase is a heterohexamer composed of biotin carboxyl carrier protein (AccB), biotin carboxylase (AccC) and two subunits each of ACCase subunit alpha (AccA) and ACCase subunit beta (AccD). It depends on Zn(2+) as a cofactor.

The protein resides in the cytoplasm. It catalyses the reaction N(6)-carboxybiotinyl-L-lysyl-[protein] + acetyl-CoA = N(6)-biotinyl-L-lysyl-[protein] + malonyl-CoA. The protein operates within lipid metabolism; malonyl-CoA biosynthesis; malonyl-CoA from acetyl-CoA: step 1/1. Component of the acetyl coenzyme A carboxylase (ACC) complex. Biotin carboxylase (BC) catalyzes the carboxylation of biotin on its carrier protein (BCCP) and then the CO(2) group is transferred by the transcarboxylase to acetyl-CoA to form malonyl-CoA. This Blochmanniella floridana protein is Acetyl-coenzyme A carboxylase carboxyl transferase subunit beta.